The following is a 431-amino-acid chain: Divergent protein kinase domain 1B (431 aa).

The Cytoplasmic portion of the chain corresponds to M1–K30. A May mediate ER retention motif is present at residues R5–R6. A helical membrane pass occupies residues Y31–S51. Topologically, residues S52–S431 are lumenal. Intrachain disulfides connect C57/C94 and C62/C117.

Belongs to the DIPK family. Among the many cysteines in the lumenal domain, most are probably involved in disulfide bonds.

It localises to the endoplasmic reticulum membrane. In Xenopus tropicalis (Western clawed frog), this protein is Divergent protein kinase domain 1B (dipk1b).